The chain runs to 167 residues: MAAAEPLTAFSRWYLYAIHGYFCEVMFTAAWEFVVNFNWKFPGVTSVWALFIYGTSILIVEKMYLYLKDKCHILVRCFIYTLWTYLWEFTTGLILRQFNACPWDYSQFDFDFMGLITLEYAIPWFCASFIMEQLVIRNTLRLRFDETAEPGAPTVPVALANGHVKTD.

The Cytoplasmic portion of the chain corresponds to 1 to 14; it reads MAAAEPLTAFSRWY. Residues 15 to 35 traverse the membrane as a helical segment; that stretch reads LYAIHGYFCEVMFTAAWEFVV. At 36–40 the chain is on the extracellular side; it reads NFNWK. The chain crosses the membrane as a helical span at residues 41 to 61; the sequence is FPGVTSVWALFIYGTSILIVE. At 62 to 72 the chain is on the cytoplasmic side; the sequence is KMYLYLKDKCH. A helical transmembrane segment spans residues 73-93; the sequence is ILVRCFIYTLWTYLWEFTTGL. Topologically, residues 94 to 109 are extracellular; the sequence is ILRQFNACPWDYSQFD. A helical transmembrane segment spans residues 110–130; the sequence is FDFMGLITLEYAIPWFCASFI. The Cytoplasmic segment spans residues 131–167; the sequence is MEQLVIRNTLRLRFDETAEPGAPTVPVALANGHVKTD.

This sequence belongs to the TMEM229 family.

Its subcellular location is the membrane. The sequence is that of Transmembrane protein 229B (TMEM229B) from Gallus gallus (Chicken).